Reading from the N-terminus, the 418-residue chain is 3-isopropylmalate dehydratase large subunit 1 (418 aa).

[4Fe-4S] cluster-binding residues include Cys-298, Cys-358, and Cys-361.

The protein belongs to the aconitase/IPM isomerase family. LeuC type 2 subfamily. As to quaternary structure, heterodimer of LeuC and LeuD. Requires [4Fe-4S] cluster as cofactor.

It carries out the reaction (2R,3S)-3-isopropylmalate = (2S)-2-isopropylmalate. It participates in amino-acid biosynthesis; L-leucine biosynthesis; L-leucine from 3-methyl-2-oxobutanoate: step 2/4. Functionally, catalyzes the isomerization between 2-isopropylmalate and 3-isopropylmalate, via the formation of 2-isopropylmaleate. This Archaeoglobus fulgidus (strain ATCC 49558 / DSM 4304 / JCM 9628 / NBRC 100126 / VC-16) protein is 3-isopropylmalate dehydratase large subunit 1.